A 154-amino-acid chain; its full sequence is Ribosome maturation factor RimP (154 aa).

The protein belongs to the RimP family.

The protein localises to the cytoplasm. In terms of biological role, required for maturation of 30S ribosomal subunits. This chain is Ribosome maturation factor RimP, found in Thioalkalivibrio sulfidiphilus (strain HL-EbGR7).